The following is a 123-amino-acid chain: Large ribosomal subunit protein bL12 (123 aa).

This sequence belongs to the bacterial ribosomal protein bL12 family. As to quaternary structure, homodimer. Part of the ribosomal stalk of the 50S ribosomal subunit. Forms a multimeric L10(L12)X complex, where L10 forms an elongated spine to which 2 to 4 L12 dimers bind in a sequential fashion. Binds GTP-bound translation factors.

Functionally, forms part of the ribosomal stalk which helps the ribosome interact with GTP-bound translation factors. Is thus essential for accurate translation. The polypeptide is Large ribosomal subunit protein bL12 (Rhodopseudomonas palustris (strain HaA2)).